Consider the following 195-residue polypeptide: A-type ATP synthase subunit E (195 aa).

The protein belongs to the V-ATPase E subunit family. Has multiple subunits with at least A(3), B(3), C, D, E, F, H, I and proteolipid K(x).

It is found in the cell membrane. Component of the A-type ATP synthase that produces ATP from ADP in the presence of a proton gradient across the membrane. The polypeptide is A-type ATP synthase subunit E (Staphylothermus marinus (strain ATCC 43588 / DSM 3639 / JCM 9404 / F1)).